A 266-amino-acid chain; its full sequence is Signal peptidase I (266 aa).

Residues 1–20 (MQTDNTKSNTNKTAKQEWWS) lie on the Cytoplasmic side of the membrane. Residues 21–41 (CAFVICIALLIRILIMEPFTV) traverse the membrane as a helical segment. Residues 42-266 (PTGSMKATIL…IFRNLYNTDE (225 aa)) lie on the Periplasmic side of the membrane. Residues Ser45 and Lys108 contribute to the active site.

It belongs to the peptidase S26 family.

It localises to the cell inner membrane. It catalyses the reaction Cleavage of hydrophobic, N-terminal signal or leader sequences from secreted and periplasmic proteins.. This is Signal peptidase I (lepB) from Rickettsia akari (strain Hartford).